The primary structure comprises 403 residues: Probable tubulin--tyrosine ligase C12B10.04 (403 aa).

The 378-residue stretch at 9 to 386 (KVYVNYRDEY…PFFESSTKRN (378 aa)) folds into the TTL domain.

Belongs to the tubulin--tyrosine ligase family. Mg(2+) is required as a cofactor. Requires K(+) as cofactor.

The protein resides in the cytoplasm. It localises to the nucleus. The enzyme catalyses C-terminal L-alpha-aminoacyl-L-glutamyl-L-glutamyl-[tubulin] + L-tyrosine + ATP = C-terminal L-alpha-aminoacyl-L-glutamyl-L-glutamyl-L-tyrosyl-[tubulin] + ADP + phosphate + H(+). In terms of biological role, probable tubulin--tyrosine ligase. This chain is Probable tubulin--tyrosine ligase C12B10.04, found in Schizosaccharomyces pombe (strain 972 / ATCC 24843) (Fission yeast).